Here is a 161-residue protein sequence, read N- to C-terminus: Kininogen-2 (161 aa).

Residues 1 to 23 form the signal peptide; the sequence is MRLWFCLSFFVVLCLEHFPGTLA. The cysteines at positions 150 and 156 are disulfide-linked. Valine amide is present on valine 160.

Belongs to the bradykinin-related peptide family. In terms of tissue distribution, expressed by the skin glands.

Its subcellular location is the secreted. Functionally, inhibits ACE with a Ki of 1.6 uM, and targets B2 bradykinin receptor (BDKRB2). Provokes contraction of smooth muscle preparation (ileum). In vivo, induces an early hyperalgesic effects in living rats after intraplantar injection. Inhibits the bradykinin-induced in vitro relaxation of rat arterial smooth muscle and constriction of intestinal smooth muscle. May target bradykinin receptors (BDKRB). In Bombina orientalis (Oriental fire-bellied toad), this protein is Kininogen-2.